The primary structure comprises 975 residues: E3 ubiquitin-protein ligase NEDD4-like (975 aa).

Ala2 carries the N-acetylalanine modification. The C2 domain occupies Gly4–Tyr126. Disordered regions lie at residues Asp178 to Lys202, Ala244 to Pro272, and Asp285 to Ser312. One can recognise a WW 1 domain in the interval Pro193–Leu226. Ser312 bears the Phosphoserine mark. The residue at position 318 (Thr318) is a Phosphothreonine. Position 342 is a phosphoserine; by WNK1 and WNK4 (Ser342). Disordered regions lie at residues Glu349–Glu393 and Gly424–Gln496. Thr367 carries the post-translational modification Phosphothreonine; by SGK1. One can recognise a WW 2 domain in the interval Pro385 to Met418. Ser446 is subject to Phosphoserine. Phosphoserine; by PKA and SGK1 is present on Ser448. Phosphoserine; by WNK1 and WNK4 is present on Ser449. The span at Gly460 to Lys471 shows a compositional bias: basic and acidic residues. Phosphoserine is present on residues Ser464, Ser475, Ser479, Ser483, and Ser487. WW domains are found at residues Ser497–Leu530 and Gly548–Leu581. The region spanning Arg640–Val974 is the HECT domain. Cys942 (glycyl thioester intermediate) is an active-site residue.

In terms of assembly, interacts with UBE2E3. Interacts with NDFIP1; this interaction activates the E3 ubiquitin-protein ligase. Interacts with NDFIP2; this interaction activates the E3 ubiquitin-protein ligase. Interacts (via WW domains) with SCN1A. Interacts (via WW domains) with SCN2A. Interacts (via WW domains) with SCN3A. Interacts (via WW domains) with SCN5A. Interacts (via WW domains) with SCN8A. Interacts (via WW domains) with SCN9A. Interacts (via WW domains) with SCN10A. Interacts (via WW domains) with CLCN5. Interacts with SMAD2. Interacts with SMAD3. Interacts with SMAD6. Interacts with SMAD7. The phosphorylated form interacts with 14-3-3 proteins. Interacts with TNK2. Interacts with WNK1. Interacts with SGK1. Interacts (via C2 domain) with NPC2. Interacts with ARRDC4. Interacts with KCNQ1; promotes internalization of KCNQ1. Interacts (via domains WW1, 3 and 4) with USP36; the interaction inhibits ubiquitination of, at least, NTRK1, KCNQ2 and KCNQ3 by NEDD4L. Interacts with PRRG4 (via cytoplasmic domain). Interacts with LDLRAD3; the interaction is direct. Interacts with UBE2D2. Interacts with TTYH2 and TTYH3. As to quaternary structure, (Microbial infection) Interacts with Epstein-Barr virus LMP2A. In terms of processing, phosphorylated by SGK1 or PKA; which impairs interaction with SCNN. Interaction with YWHAH inhibits dephosphorylation. Auto-ubiquitinated. Deubiquitinated by USP36, no effect on NEDD4L protein levels. Both proteins interact and regulate each other's ubiquitination levels. Ubiquitously expressed, with highest levels in prostate, pancreas, and kidney. Expressed in melanocytes.

It localises to the cytoplasm. It is found in the golgi apparatus. The protein resides in the endosome. The protein localises to the multivesicular body. The enzyme catalyses S-ubiquitinyl-[E2 ubiquitin-conjugating enzyme]-L-cysteine + [acceptor protein]-L-lysine = [E2 ubiquitin-conjugating enzyme]-L-cysteine + N(6)-ubiquitinyl-[acceptor protein]-L-lysine.. The catalysed reaction is [E2 ubiquitin-conjugating enzyme]-S-ubiquitinyl-L-cysteine + [acceptor protein]-L-cysteine = [E2 ubiquitin-conjugating enzyme]-L-cysteine + [acceptor protein]-S-ubiquitinyl-L-cysteine.. It functions in the pathway protein modification; protein ubiquitination. Activated by NDFIP1- and NDFIP2-binding. In terms of biological role, E3 ubiquitin-protein ligase that mediates the polyubiquitination of lysine and cysteine residues on target proteins and is thereby implicated in the regulation of various signaling pathways including autophagy, innate immunity or DNA repair. Inhibits TGF-beta signaling by triggering SMAD2 and TGFBR1 ubiquitination and proteasome-dependent degradation. Downregulates autophagy and cell growth by ubiquitinating and reducing cellular ULK1 or ASCT2 levels. Promotes ubiquitination and internalization of various plasma membrane channels such as ENaC, SCN2A/Nav1.2, SCN3A/Nav1.3, SCN5A/Nav1.5, SCN9A/Nav1.7, SCN10A/Nav1.8, KCNA3/Kv1.3, KCNH2, EAAT1, KCNQ2/Kv7.2, KCNQ3/Kv7.3 or CLC5. Promotes ubiquitination and degradation of SGK1 and TNK2. Ubiquitinates BRAT1 and this ubiquitination is enhanced in the presence of NDFIP1. Plays a role in dendrite formation by melanocytes. Involved in the regulation of TOR signaling. Ubiquitinates and regulates protein levels of NTRK1 once this one is activated by NGF. Plays a role in antiviral innate immunity by catalyzing 'Lys-29'-linked cysteine ubiquitination of TRAF3, resulting in enhanced 'Lys-48' and 'Lys-63'-linked ubiquitination of TRAF3. Ubiquitinates TTYH2 and TTYH3 and regulates protein levels of TTYH2. This Homo sapiens (Human) protein is E3 ubiquitin-protein ligase NEDD4-like.